The following is a 228-amino-acid chain: Lipoprotein-releasing system ATP-binding protein LolD (228 aa).

Residues 6 to 227 form the ABC transporter domain; sequence LELLGIDRTY…LKDGKLIDYV (222 aa). Residue 42 to 49 participates in ATP binding; it reads GPSGSGKS.

It belongs to the ABC transporter superfamily. Lipoprotein translocase (TC 3.A.1.125) family. The complex is composed of two ATP-binding proteins (LolD) and two transmembrane proteins (LolC and LolE).

The protein localises to the cell inner membrane. In terms of biological role, part of the ABC transporter complex LolCDE involved in the translocation of mature outer membrane-directed lipoproteins, from the inner membrane to the periplasmic chaperone, LolA. Responsible for the formation of the LolA-lipoprotein complex in an ATP-dependent manner. The chain is Lipoprotein-releasing system ATP-binding protein LolD from Hyphomonas neptunium (strain ATCC 15444).